A 657-amino-acid polypeptide reads, in one-letter code: Protein kinase and PP2C-like domain-containing protein (657 aa).

The Protein kinase domain occupies 32 to 327 (FSLLSPIAKG…LKIIEKHIAV (296 aa)). ATP contacts are provided by residues 38–46 (IAKGSESTV) and K59. D156 functions as the Proton acceptor; for kinase activity in the catalytic mechanism. The PPM-type phosphatase domain maps to 390–647 (SWGSFATCGR…DNITVIVVFL (258 aa)). Residues D426, G427, D598, and D638 each coordinate Mn(2+).

This sequence in the N-terminal section; belongs to the protein kinase superfamily. Ser/Thr protein kinase family. The protein in the C-terminal section; belongs to the PP2C family. The cofactor is Mg(2+). Mn(2+) is required as a cofactor.

It carries out the reaction L-seryl-[protein] + ATP = O-phospho-L-seryl-[protein] + ADP + H(+). The catalysed reaction is L-threonyl-[protein] + ATP = O-phospho-L-threonyl-[protein] + ADP + H(+). The enzyme catalyses O-phospho-L-seryl-[protein] + H2O = L-seryl-[protein] + phosphate. It catalyses the reaction O-phospho-L-threonyl-[protein] + H2O = L-threonyl-[protein] + phosphate. The sequence is that of Protein kinase and PP2C-like domain-containing protein from Oryza sativa subsp. japonica (Rice).